The sequence spans 299 residues: Beta-lactamase VEB-1 (299 aa).

An N-terminal signal peptide occupies residues 1–23 (MKIVKRILLVLLSLFFTIVYSNA). The active-site Nucleophile; acyl-ester intermediate is Ser68. The a beta-lactam site is built by Lys71, Ser131, and Glu167. The Proton acceptor role is filled by Glu167.

It belongs to the class-A beta-lactamase family.

The enzyme catalyses a beta-lactam + H2O = a substituted beta-amino acid. Its activity is regulated as follows. Inhibited by the beta-lactamase-blocking agent clavulanic acid. Functionally, class A beta-lactamase which confers resistance to the beta-lactam antibiotics, including penicillins and cephalosporins, in E.coli strain JM109. Acts via hydrolysis of the beta-lactam ring. Has penicillin-, and cephalosporin-hydrolyzing activities. In Pseudomonas aeruginosa, this protein is Beta-lactamase VEB-1.